The chain runs to 781 residues: Probable beta-D-xylosidase 5 (781 aa).

The signal sequence occupies residues 1-23 (MSIRRFVRLSLLIIALVSSLCES). N-linked (GlcNAc...) asparagine glycans are attached at residues Asn43, Asn103, and Asn123. Asp291 is a catalytic residue. N-linked (GlcNAc...) asparagine glycosylation is found at Asn342, Asn424, Asn504, Asn543, Asn601, and Asn653.

It belongs to the glycosyl hydrolase 3 family.

Its subcellular location is the secreted. The protein resides in the extracellular space. It is found in the extracellular matrix. This Arabidopsis thaliana (Mouse-ear cress) protein is Probable beta-D-xylosidase 5 (BXL5).